We begin with the raw amino-acid sequence, 309 residues long: Elongator complex protein 5 (309 aa).

Ser3 and Ser4 each carry phosphoserine.

This sequence belongs to the ELP5 family. Component of the elongator complex, which consists of ELP1/IKI3, ELP2, ELP3, ELP4, ELP5/IKI1 and ELP6. The elongator complex is composed of two copies of the Elp123 subcomplex (composed of ELP1/IKI3, ELP2 and ELP3) and two copies of the Elp456 subcomplex (composed of ELP4, ELP5/IKI1 and ELP6). The Elp123 subcomplex forms a two-lobed scaffold, which binds the Elp456 subcomplex asymmetrically. In each lobe, ELP2 is tightly sandwiched between ELP1/IKI3 and ELP3. The Elp123 subcomplex binds tRNA through ELP1/IKI3 and ELP3 and can bind 2 tRNAs simultaneously. tRNA-binding by the Elp123 subcomplex induces conformational rearrangements which precisely position the targeted anticodon base in the active site. The Elp456 subcomplex binds tRNA and has ATPase activity. Interacts with KTI11/DPH3.

Its subcellular location is the cytoplasm. It localises to the nucleus. Its pathway is tRNA modification; 5-methoxycarbonylmethyl-2-thiouridine-tRNA biosynthesis. Its function is as follows. Component of the elongator complex which is required for multiple tRNA modifications, including mcm5U (5-methoxycarbonylmethyl uridine), mcm5s2U (5-methoxycarbonylmethyl-2-thiouridine), and ncm5U (5-carbamoylmethyl uridine). The elongator complex catalyzes formation of carboxymethyluridine in the wobble base at position 34 in tRNAs. It functions as a gamma-toxin target (TOT); disruption of the complex confers resistance to Kluyveromyces lactis toxin zymocin (pGKL1 killer toxin). May also be involved in sensitivity to Pichia inositovora toxin. The sequence is that of Elongator complex protein 5 (IKI1) from Saccharomyces cerevisiae (strain ATCC 204508 / S288c) (Baker's yeast).